The sequence spans 61 residues: UPF0434 protein PSEEN1604 (61 aa).

Belongs to the UPF0434 family.

The chain is UPF0434 protein PSEEN1604 from Pseudomonas entomophila (strain L48).